Here is a 73-residue protein sequence, read N- to C-terminus: Cell division protein ZapB (73 aa).

Positions 3–66 form a coiled coil; sequence LELLSKLETK…SWNEKVTGLV (64 aa).

It belongs to the ZapB family. In terms of assembly, homodimer. The ends of the coiled-coil dimer bind to each other, forming polymers. Interacts with FtsZ.

Its subcellular location is the cytoplasm. Non-essential, abundant cell division factor that is required for proper Z-ring formation. It is recruited early to the divisome by direct interaction with FtsZ, stimulating Z-ring assembly and thereby promoting cell division earlier in the cell cycle. Its recruitment to the Z-ring requires functional FtsA or ZipA. The chain is Cell division protein ZapB from Shewanella baltica (strain OS223).